Consider the following 187-residue polypeptide: Elongation factor P (187 aa).

This sequence belongs to the elongation factor P family.

It is found in the cytoplasm. It functions in the pathway protein biosynthesis; polypeptide chain elongation. Involved in peptide bond synthesis. Stimulates efficient translation and peptide-bond synthesis on native or reconstituted 70S ribosomes in vitro. Probably functions indirectly by altering the affinity of the ribosome for aminoacyl-tRNA, thus increasing their reactivity as acceptors for peptidyl transferase. This chain is Elongation factor P, found in Leifsonia xyli subsp. xyli (strain CTCB07).